We begin with the raw amino-acid sequence, 277 residues long: 3-methyl-2-oxobutanoate hydroxymethyltransferase (277 aa).

Mg(2+) is bound by residues Asp-43 and Asp-82. 3-methyl-2-oxobutanoate is bound by residues 43-44, Asp-82, and Lys-112; that span reads DS. Glu-114 contributes to the Mg(2+) binding site. Residue Glu-181 is the Proton acceptor of the active site.

The protein belongs to the PanB family. In terms of assembly, homodecamer; pentamer of dimers. The cofactor is Mg(2+).

Its subcellular location is the cytoplasm. The enzyme catalyses 3-methyl-2-oxobutanoate + (6R)-5,10-methylene-5,6,7,8-tetrahydrofolate + H2O = 2-dehydropantoate + (6S)-5,6,7,8-tetrahydrofolate. It functions in the pathway cofactor biosynthesis; (R)-pantothenate biosynthesis; (R)-pantoate from 3-methyl-2-oxobutanoate: step 1/2. Catalyzes the reversible reaction in which hydroxymethyl group from 5,10-methylenetetrahydrofolate is transferred onto alpha-ketoisovalerate to form ketopantoate. This Listeria monocytogenes serotype 4a (strain HCC23) protein is 3-methyl-2-oxobutanoate hydroxymethyltransferase.